The primary structure comprises 107 residues: Thioredoxin (107 aa).

One can recognise a Thioredoxin domain in the interval 2–107; the sequence is SATPQVSDAS…TLASTLEKYL (106 aa). The cysteines at positions 32 and 35 are disulfide-linked.

Belongs to the thioredoxin family.

Functionally, component of the thioredoxin-thioredoxin reductase system. Participates in various redox reactions through the reversible oxidation of its active center dithiol to a disulfide and catalyzes dithiol-disulfide exchange reactions. The sequence is that of Thioredoxin (trxA) from Synechocystis sp. (strain ATCC 27184 / PCC 6803 / Kazusa).